A 339-amino-acid polypeptide reads, in one-letter code: Mitogen-activated protein kinase kinase kinase 18 (339 aa).

Residues 3–263 (WTRGKTLGRG…ASQLLNHPFL (261 aa)) enclose the Protein kinase domain. Residues 9-17 (LGRGSTATV) and Lys-32 contribute to the ATP site. Residue Asp-131 is the Proton acceptor of the active site. Ser-301 is subject to Phosphoserine.

This sequence belongs to the protein kinase superfamily. Ser/Thr protein kinase family. Interacts with ABI1. Binds to MKK3. Associates with SRK2E within the nucleus. Autophosphorylated. In terms of processing, unstable protein degraded by the proteasome pathway; this degradation is promoted by ABI1, but blocked by ABA. Expressed in roots, leaves and flowers.

It is found in the nucleus. It carries out the reaction L-seryl-[protein] + ATP = O-phospho-L-seryl-[protein] + ADP + H(+). The enzyme catalyses L-threonyl-[protein] + ATP = O-phospho-L-threonyl-[protein] + ADP + H(+). Kinase activity is activated by abscisic acid (ABA). Inhibited by ABI1. Activated by SRK2E. Component of the abscisic acid (ABA) signaling pathway that acts as ABA signal transducer in the context of abiotic stresses. Triggers MPK1, MPK2, MPK7 and MPK14 activation in a MKK3-dependent manner and MPK6 activation in a MKK3-independent manner. Mediates the ABA-dependent activation of the MKK3-MPK7 module. Positive regulator of ABA responses leading to the induction of gene expression (e.g. RD29B and RAB18) and involved in various responses including stomatal development, stomatal movement, inhibition of germination and root growth. Promotes leaf senescence. This Arabidopsis thaliana (Mouse-ear cress) protein is Mitogen-activated protein kinase kinase kinase 18.